We begin with the raw amino-acid sequence, 234 residues long: tRNA1(Val) (adenine(37)-N6)-methyltransferase (234 aa).

The protein belongs to the methyltransferase superfamily. tRNA (adenine-N(6)-)-methyltransferase family.

The protein resides in the cytoplasm. It catalyses the reaction adenosine(37) in tRNA1(Val) + S-adenosyl-L-methionine = N(6)-methyladenosine(37) in tRNA1(Val) + S-adenosyl-L-homocysteine + H(+). Functionally, specifically methylates the adenine in position 37 of tRNA(1)(Val) (anticodon cmo5UAC). This Pedobacter heparinus (strain ATCC 13125 / DSM 2366 / CIP 104194 / JCM 7457 / NBRC 12017 / NCIMB 9290 / NRRL B-14731 / HIM 762-3) protein is tRNA1(Val) (adenine(37)-N6)-methyltransferase.